The following is a 269-amino-acid chain: Aquaporin-1 (269 aa).

The Cytoplasmic segment spans residues 1 to 11 (MASEFKKKLFW). A helical transmembrane segment spans residues 12–29 (RAVVAEFLAMTLFVFISI). Topologically, residues 30-46 (GSALGFKYPVGNNQTAV) are extracellular. A glycan (N-linked (GlcNAc...) asparagine) is linked at N42. The chain crosses the membrane as a helical span at residues 47–65 (QDNVKVSLAFGLSIATLAQ). At 66-68 (SVG) the chain is on the cytoplasmic side. The stretch at 69–82 (HISGAHLNPAVTLG) is an intramembrane region. The NPA 1 motif lies at 76-78 (NPA). Residues 83-90 (LLLSCQIS) are Cytoplasmic-facing. The helical transmembrane segment at 91 to 109 (IFRALMYIIAQCVGAIVAT) threads the bilayer. The Extracellular segment spans residues 110–133 (AILSGITSSLPGNSLGRNDLADGV). The helical transmembrane segment at 134–153 (NSGQGLGIEIIGTLQLVLCV) threads the bilayer. Residues 154–163 (LATTDRRRRD) lie on the Cytoplasmic side of the membrane. A helical transmembrane segment spans residues 164–181 (LGGSAPLAIGLSVALGHL). Residues 182 to 186 (LAIDY) lie on the Extracellular side of the membrane. An intramembrane segment occupies 187–199 (TGCGINPARSFGS). Residues 192–194 (NPA) carry the NPA 2 motif. The Extracellular segment spans residues 200–206 (AVITHNF). The N-linked (GlcNAc...) asparagine glycan is linked to N205. A helical transmembrane segment spans residues 207-224 (SNHWIFWVGPFIGGALAV). Residues 225-269 (LIYDFILAPRSSDFTDRVKVWTSGQVEEYDLDADDINSRVEMKPK) are Cytoplasmic-facing. Residue S247 is modified to Phosphoserine. Y253 bears the Phosphotyrosine mark. A Phosphoserine modification is found at S262.

The protein belongs to the MIP/aquaporin (TC 1.A.8) family. Homotetramer; each monomer provides an independent water pore. Component of the ankyrin-1 complex in the erythrocyte, composed of ANK1, RHCE, RHAG, SLC4A1, EPB42, GYPA, GYPB and AQP1. Interacts with EPHB2; involved in endolymph production in the inner ear. Identified in a complex with STOM. Interacts (via the N-terminal) with ANK1 (via ANK 1-5 repeats). Interacts (via the C-terminal) with EPB42.

It is found in the cell membrane. The enzyme catalyses H2O(in) = H2O(out). It catalyses the reaction nitric oxide(out) = nitric oxide(in). The catalysed reaction is CO2(out) = CO2(in). It carries out the reaction glycerol(in) = glycerol(out). The enzyme catalyses H2O2(out) = H2O2(in). It catalyses the reaction K(+)(in) = K(+)(out). The catalysed reaction is Na(+)(in) = Na(+)(out). In terms of biological role, forms a water channel that facilitates the transport of water across cell membranes, playing a crucial role in water homeostasis in various tissues. Could also be permeable to small solutes including hydrogen peroxide, glycerol and gases such as amonnia (NH3), nitric oxide (NO) and carbon dioxide (CO2). Recruited to the ankyrin-1 complex, a multiprotein complex of the erythrocyte membrane, it could be part of a CO2 metabolon, linking facilitated diffusion of CO2 across the membrane, anion exchange of Cl(-)/HCO3(-) and interconversion of dissolved CO2 and carbonic acid in the cytosol. In vitro, it shows non-selective gated cation channel activity and may be permeable to cations like K(+) and Na(+) in vivo. The polypeptide is Aquaporin-1 (Pongo abelii (Sumatran orangutan)).